A 624-amino-acid polypeptide reads, in one-letter code: MKGQETRGFQSEVKQLLHLMIHSLYSNKEIFLRELISNASDAADKLRFRALSNPDLYEGDGELRVRVSFDKDKRTLTIADNGVGMNRDEVIDHLGTIAKSGTKSFLESMGSDQAKDSQLIGQFGVGFYSAFIVADKVTVRTRAAGDKPENGVFWESAGEGEYTVADITKNDRGTEITLHLREGEDEFLDDWRVRSIISKYSDHIALPVEIEKREEKDGETVISWEKINKAQALWTRNKSEIKDDEYNEFYKHIAHDFTDPLTWSHNRVEGKQEYTSLLYIPSQAPWDLWNRDHKHGLKLYVQRVFIMDDAEQFMPNYLRFVRGLIDSNDLPLNVSREILQDSTVTRNLRSALTKRVLQMLEKLAKDDAEKYQTFWKQFGLVLKEGPAEDHANQEAIAKLLRFASTHTDSSAQTVSLEDYVSRMKEGQEKIYYITADSYAAAKNSPHLELLRKKGIEVLLLSDRIDEWMMNYLTEFDGKAFQSVAKADESIEKLADEVDENAKEAEKVLEPFVERVKTLLGDRVKDVRLTHRLTDTPAIVTTDADEMSTQMAKLFAAAGQSVPEVKYIFELNPDHVLVKRTADTKDEAQFKEWVELLLDQALFAERGTLEDPNQFIRRMNQLLVS.

An a; substrate-binding region spans residues 1–336 (MKGQETRGFQ…SNDLPLNVSR (336 aa)). The tract at residues 337–552 (EILQDSTVTR…ADEMSTQMAK (216 aa)) is b. A c region spans residues 553–624 (LFAAAGQSVP…IRRMNQLLVS (72 aa)).

This sequence belongs to the heat shock protein 90 family. In terms of assembly, homodimer.

The protein localises to the cytoplasm. Its function is as follows. Molecular chaperone. Has ATPase activity. This chain is Chaperone protein HtpG, found in Salmonella choleraesuis (strain SC-B67).